The primary structure comprises 259 residues: Hydroxyacylglutathione hydrolase (259 aa).

Zn(2+) contacts are provided by His56, His58, Asp60, His61, His112, Asp133, and His171. Basic and acidic residues predominate over residues 224–238 (RTRETSVKEKADERS). Positions 224 to 245 (RTRETSVKEKADERSSGQNTSQ) are disordered.

This sequence belongs to the metallo-beta-lactamase superfamily. Glyoxalase II family. In terms of assembly, monomer. It depends on Zn(2+) as a cofactor.

It catalyses the reaction an S-(2-hydroxyacyl)glutathione + H2O = a 2-hydroxy carboxylate + glutathione + H(+). It participates in secondary metabolite metabolism; methylglyoxal degradation; (R)-lactate from methylglyoxal: step 2/2. Thiolesterase that catalyzes the hydrolysis of S-D-lactoyl-glutathione to form glutathione and D-lactic acid. The chain is Hydroxyacylglutathione hydrolase from Pseudomonas savastanoi pv. phaseolicola (strain 1448A / Race 6) (Pseudomonas syringae pv. phaseolicola (strain 1448A / Race 6)).